The following is a 119-amino-acid chain: NADH-quinone oxidoreductase subunit A (119 aa).

The next 3 helical transmembrane spans lie at 7 to 27, 63 to 83, and 88 to 108; these read FPVL…MFLG, LIAI…PWGV, and IGWF…VGFV.

It belongs to the complex I subunit 3 family. NDH-1 is composed of 14 different subunits. Subunits NuoA, H, J, K, L, M, N constitute the membrane sector of the complex.

Its subcellular location is the cell membrane. The enzyme catalyses a quinone + NADH + 5 H(+)(in) = a quinol + NAD(+) + 4 H(+)(out). Functionally, NDH-1 shuttles electrons from NADH, via FMN and iron-sulfur (Fe-S) centers, to quinones in the respiratory chain. The immediate electron acceptor for the enzyme in this species is believed to be ubiquinone. Couples the redox reaction to proton translocation (for every two electrons transferred, four hydrogen ions are translocated across the cytoplasmic membrane), and thus conserves the redox energy in a proton gradient. This is NADH-quinone oxidoreductase subunit A from Polynucleobacter asymbioticus (strain DSM 18221 / CIP 109841 / QLW-P1DMWA-1) (Polynucleobacter necessarius subsp. asymbioticus).